Consider the following 337-residue polypeptide: DNA-directed RNA polymerase subunit alpha (337 aa).

The segment at M1–Q233 is alpha N-terminal domain (alpha-NTD). Positions I267–F337 are alpha C-terminal domain (alpha-CTD).

It belongs to the RNA polymerase alpha chain family. In plastids the minimal PEP RNA polymerase catalytic core is composed of four subunits: alpha, beta, beta', and beta''. When a (nuclear-encoded) sigma factor is associated with the core the holoenzyme is formed, which can initiate transcription.

The protein resides in the plastid. It is found in the chloroplast. The enzyme catalyses RNA(n) + a ribonucleoside 5'-triphosphate = RNA(n+1) + diphosphate. In terms of biological role, DNA-dependent RNA polymerase catalyzes the transcription of DNA into RNA using the four ribonucleoside triphosphates as substrates. The sequence is that of DNA-directed RNA polymerase subunit alpha from Platanus occidentalis (Sycamore).